The sequence spans 329 residues: Serpentine receptor class alpha-3 (329 aa).

The next 7 membrane-spanning stretches (helical) occupy residues Leu25 to Ile45, Ile57 to Ile77, Tyr104 to Phe124, Gly144 to Trp164, Thr187 to Ile207, Ile238 to Leu258, and Phe273 to Ile293.

The protein belongs to the nematode receptor-like protein sra family.

The protein resides in the membrane. This is Serpentine receptor class alpha-3 (sra-3) from Caenorhabditis elegans.